Consider the following 493-residue polypeptide: Alcohol-forming fatty acyl-CoA reductase (493 aa).

The protein belongs to the fatty acyl-CoA reductase family.

The catalysed reaction is a long-chain fatty acyl-CoA + 2 NADPH + 2 H(+) = a long-chain primary fatty alcohol + 2 NADP(+) + CoA. Functionally, NADPH-dependent alcohol-forming fatty acyl-coenzyme A reductase that catalyzes the reduction of fatty acyl-CoA to fatty alcohols. The recombinant enzyme accepts saturated and mono-unsaturated fatty acyl-CoAs of 16 to 22 carbons. This is Alcohol-forming fatty acyl-CoA reductase from Simmondsia chinensis (Jojoba).